The following is a 477-amino-acid chain: Cytochrome P450 monooxygenase poxC (477 aa).

Residues 24 to 41 traverse the membrane as a helical segment; the sequence is AWHFAVLSFVYVIARSIY. Cysteine 420 contacts heme.

This sequence belongs to the cytochrome P450 family. Heme serves as cofactor.

It localises to the membrane. It participates in secondary metabolite biosynthesis. In terms of biological role, cytochrome P450 monooxygenase; part of the gene cluster that mediates the biosynthesis of oxaleimides, cytotoxic compounds containing an unusual disubstituted succinimide moiety. The first step of the pathway is provided by the HR-PKS poxF that serves in a new mode of collaborative biosynthesis with the PKS-NRPS poxE, by providing the olefin containing amino acid substrate via the synthesis of an ACP-bound dec-4-enoate. The cytochrome P450 monooxygenase poxM-catalyzed oxidation at the alpha-position creates the enzyme-bound 2-hydroxydec-4-enoyl-ACP thioester, which may be prone to spontaneous hydrolysis to yield 2-hydroxydec-4-enoic acid due to increased electrophilicity of the carbonyl. 2-hydroxydec-4-enoic acid can then be further oxidized by poxM to yield the alpha-ketoacid 2-oxodec-4-enoicacid, which is reductively aminated by the aminotransferase poxL to yield (S,E)-2-aminodec-4-enoic acid. The Hybrid PKS-NRPS synthetase poxE then performs condensation between the octaketide product of its PKS modules and the amino group of (S,E)-2-aminodec-4-enoic acid which is activated and incorporated by the adenylation domain. The resulting aminoacyl product can be cyclized by the Diels-Alderase PoxQ and reductively released by the reductive (R) domain of poxE to yield an aldehyde intermediate. The released aldehyde is then substrate for a Knoevenagel condensation by the hydrolyase poxO followed by an oxidation at the 5-position of the pyrrolidone ring. The presence of the olefin from the amino acid building block allows for migration of the substituted allyl group to occur. This allylic transposition reaction takes place in a conjugate addition, semipinacol-like fashion to yield a succinimide intermediate. Iterative two-electron oxidations of the C7 methyl of the succinimide intermediate to the carboxylic acid can be catalyzed by one of two remaining cytochrome P450 monooxygenasess poxC or poxD to yield oxaleimide A. Subsequent oxidation yields the maleimide scaffold oxaleimide I. Both oxaleimide A and oxaleimide I can undergo oxidative modifications in the decalin ring to yield the series of products oxaleimides B to H. This is Cytochrome P450 monooxygenase poxC from Penicillium oxalicum (strain 114-2 / CGMCC 5302) (Penicillium decumbens).